The primary structure comprises 98 residues: Large ribosomal subunit protein uL23 (98 aa).

It belongs to the universal ribosomal protein uL23 family. As to quaternary structure, part of the 50S ribosomal subunit. Contacts protein L29, and trigger factor when it is bound to the ribosome.

Its function is as follows. One of the early assembly proteins it binds 23S rRNA. One of the proteins that surrounds the polypeptide exit tunnel on the outside of the ribosome. Forms the main docking site for trigger factor binding to the ribosome. The polypeptide is Large ribosomal subunit protein uL23 (Nitrosococcus oceani (strain ATCC 19707 / BCRC 17464 / JCM 30415 / NCIMB 11848 / C-107)).